Consider the following 316-residue polypeptide: Acetaldehyde dehydrogenase (316 aa).

An NAD(+)-binding site is contributed by 11–14; it reads SGNI. The active-site Acyl-thioester intermediate is the cysteine 131. Residues 162 to 170 and asparagine 289 each bind NAD(+); that span reads SAGPGTRAN.

This sequence belongs to the acetaldehyde dehydrogenase family. As to quaternary structure, interacts with MhpE.

The enzyme catalyses acetaldehyde + NAD(+) + CoA = acetyl-CoA + NADH + H(+). It functions in the pathway aromatic compound metabolism; 3-phenylpropanoate degradation. In terms of biological role, catalyzes the conversion of acetaldehyde to acetyl-CoA, using NAD(+) and coenzyme A. Is the final enzyme in the meta-cleavage pathway for the degradation of aromatic compounds. This Shigella sonnei (strain Ss046) protein is Acetaldehyde dehydrogenase.